A 427-amino-acid polypeptide reads, in one-letter code: Serine--tRNA ligase (427 aa).

231 to 233 (TAE) is a binding site for L-serine. Residue 262–264 (RSE) participates in ATP binding. E285 contacts L-serine. Position 349 to 352 (349 to 352 (EISS)) interacts with ATP. S385 lines the L-serine pocket.

Belongs to the class-II aminoacyl-tRNA synthetase family. Type-1 seryl-tRNA synthetase subfamily. As to quaternary structure, homodimer. The tRNA molecule binds across the dimer.

It is found in the cytoplasm. The enzyme catalyses tRNA(Ser) + L-serine + ATP = L-seryl-tRNA(Ser) + AMP + diphosphate + H(+). The catalysed reaction is tRNA(Sec) + L-serine + ATP = L-seryl-tRNA(Sec) + AMP + diphosphate + H(+). It participates in aminoacyl-tRNA biosynthesis; selenocysteinyl-tRNA(Sec) biosynthesis; L-seryl-tRNA(Sec) from L-serine and tRNA(Sec): step 1/1. Functionally, catalyzes the attachment of serine to tRNA(Ser). Is also able to aminoacylate tRNA(Sec) with serine, to form the misacylated tRNA L-seryl-tRNA(Sec), which will be further converted into selenocysteinyl-tRNA(Sec). The protein is Serine--tRNA ligase of Methylococcus capsulatus (strain ATCC 33009 / NCIMB 11132 / Bath).